Reading from the N-terminus, the 182-residue chain is Large ribosomal subunit protein uL5 (182 aa).

This sequence belongs to the universal ribosomal protein uL5 family. Part of the 50S ribosomal subunit; part of the 5S rRNA/L5/L18/L25 subcomplex. Contacts the 5S rRNA and the P site tRNA. Forms a bridge to the 30S subunit in the 70S ribosome.

Functionally, this is one of the proteins that bind and probably mediate the attachment of the 5S RNA into the large ribosomal subunit, where it forms part of the central protuberance. In the 70S ribosome it contacts protein S13 of the 30S subunit (bridge B1b), connecting the 2 subunits; this bridge is implicated in subunit movement. Contacts the P site tRNA; the 5S rRNA and some of its associated proteins might help stabilize positioning of ribosome-bound tRNAs. This is Large ribosomal subunit protein uL5 from Coxiella burnetii (strain CbuK_Q154) (Coxiella burnetii (strain Q154)).